Here is a 200-residue protein sequence, read N- to C-terminus: Large ribosomal subunit protein uL4 (200 aa).

The interval 43 to 70 is disordered; the sequence is RAQKTRAEVSGSGKKPWRQKGTGRARSG.

Belongs to the universal ribosomal protein uL4 family. As to quaternary structure, part of the 50S ribosomal subunit.

In terms of biological role, one of the primary rRNA binding proteins, this protein initially binds near the 5'-end of the 23S rRNA. It is important during the early stages of 50S assembly. It makes multiple contacts with different domains of the 23S rRNA in the assembled 50S subunit and ribosome. Functionally, forms part of the polypeptide exit tunnel. This chain is Large ribosomal subunit protein uL4, found in Glaesserella parasuis serovar 5 (strain SH0165) (Haemophilus parasuis).